The chain runs to 341 residues: L-threonine 3-dehydrogenase (341 aa).

Cys38 is a Zn(2+) binding site. Catalysis depends on charge relay system residues Thr40 and His43. Zn(2+)-binding residues include His63, Glu64, Cys93, Cys96, Cys99, and Cys107. Residues Ile175, Asp195, Arg200, 262 to 264, and 286 to 287 each bind NAD(+); these read LGI and IY.

This sequence belongs to the zinc-containing alcohol dehydrogenase family. Homotetramer. The cofactor is Zn(2+).

It localises to the cytoplasm. The catalysed reaction is L-threonine + NAD(+) = (2S)-2-amino-3-oxobutanoate + NADH + H(+). Its pathway is amino-acid degradation; L-threonine degradation via oxydo-reductase pathway; glycine from L-threonine: step 1/2. Its function is as follows. Catalyzes the NAD(+)-dependent oxidation of L-threonine to 2-amino-3-ketobutyrate. The sequence is that of L-threonine 3-dehydrogenase from Shewanella baltica (strain OS185).